The chain runs to 274 residues: Triosephosphate isomerase (274 aa).

Residue N13–K15 coordinates substrate. Catalysis depends on H98, which acts as the Electrophile. Residue E170 is the Proton acceptor of the active site. The substrate site is built by G176 and S216.

The protein belongs to the triosephosphate isomerase family. As to quaternary structure, homodimer.

It is found in the cytoplasm. It carries out the reaction D-glyceraldehyde 3-phosphate = dihydroxyacetone phosphate. Its pathway is carbohydrate biosynthesis; gluconeogenesis. The protein operates within carbohydrate degradation; glycolysis; D-glyceraldehyde 3-phosphate from glycerone phosphate: step 1/1. Its function is as follows. Involved in the gluconeogenesis. Catalyzes stereospecifically the conversion of dihydroxyacetone phosphate (DHAP) to D-glyceraldehyde-3-phosphate (G3P). This is Triosephosphate isomerase from Aster yellows witches'-broom phytoplasma (strain AYWB).